The chain runs to 451 residues: Tapasin-related protein (451 aa).

The first 20 residues, 1–20 (MGLEPSWYLLLCLAVSGAAG), serve as a signal peptide directing secretion. Residues 21–412 (TDPPTAPTTA…RVLPNPEQRG (392 aa)) lie on the Lumenal side of the membrane. The Ig-like V-type domain maps to 196 to 301 (FQVTSETQTL…TSLYQAQQIM (106 aa)). Disulfide bonds link C217–C288 and C326–C387. N270 and N277 each carry an N-linked (GlcNAc...) asparagine glycan. An Ig-like C1-type domain is found at 302–399 (PLNILAPPKI…AHVSLEEPLT (98 aa)). Residues 413-433 (TLGVIFASIIFLSALLLFLGL) traverse the membrane as a helical segment. The Cytoplasmic segment spans residues 434-451 (HRQQASSSRSTRPMRHSG).

As to quaternary structure, interacts with peptide-free HLA-A*02-B2M complexes or those loaded with low affinity peptides, likely facilitating peptide exchange onto higher affinity peptides. Interacts with MR1 in a ligand-independent way; this interaction may stabilize MR1 pool and facilitate ligand loading and dissociation. As to expression, widely expressed.

The protein localises to the cell membrane. Its subcellular location is the endoplasmic reticulum membrane. The protein resides in the microsome membrane. It is found in the golgi apparatus membrane. Component of the antigen processing and presentation pathway, which binds to MHC class I coupled with beta2-microglobulin/B2M. Association between TAPBPR and MHC class I occurs in the absence of a functional peptide-loading complex (PLC). Expression seems to slow down and down-regulate MHC class I surface expression. This Mus musculus (Mouse) protein is Tapasin-related protein (Tapbpl).